Here is a 218-residue protein sequence, read N- to C-terminus: Non-structural protein NS3 (218 aa).

The protein belongs to the orbivirus NS3 family.

Its function is as follows. May play a role in the release of virions from infected cells. The protein is Non-structural protein NS3 (Segment-10) of Camelus dromedarius (Dromedary).